The primary structure comprises 258 residues: Putative cysteine-rich repeat secretory protein 16 (258 aa).

The N-terminal stretch at Met1–Ser30 is a signal peptide. Gnk2-homologous domains lie at Tyr37–Thr139 and Asp144–Phe247.

The protein belongs to the cysteine-rich repeat secretory protein family.

Its subcellular location is the secreted. The polypeptide is Putative cysteine-rich repeat secretory protein 16 (CRRSP16) (Arabidopsis thaliana (Mouse-ear cress)).